The sequence spans 273 residues: Dermonecrotic toxin LapSicTox-alphaIB2 (273 aa).

His5 is an active-site residue. Mg(2+) is bound by residues Glu25 and Asp27. The Nucleophile role is filled by His41. 2 disulfide bridges follow: Cys45-Cys51 and Cys47-Cys190. Asp85 is a Mg(2+) binding site. Residue Asn250 is glycosylated (N-linked (GlcNAc...) asparagine).

Belongs to the arthropod phospholipase D family. Class II subfamily. Mg(2+) serves as cofactor. As to expression, expressed by the venom gland.

It is found in the secreted. The catalysed reaction is an N-(acyl)-sphingosylphosphocholine = an N-(acyl)-sphingosyl-1,3-cyclic phosphate + choline. It catalyses the reaction an N-(acyl)-sphingosylphosphoethanolamine = an N-(acyl)-sphingosyl-1,3-cyclic phosphate + ethanolamine. The enzyme catalyses a 1-acyl-sn-glycero-3-phosphocholine = a 1-acyl-sn-glycero-2,3-cyclic phosphate + choline. It carries out the reaction a 1-acyl-sn-glycero-3-phosphoethanolamine = a 1-acyl-sn-glycero-2,3-cyclic phosphate + ethanolamine. In terms of biological role, dermonecrotic toxins cleave the phosphodiester linkage between the phosphate and headgroup of certain phospholipids (sphingolipid and lysolipid substrates), forming an alcohol (often choline) and a cyclic phosphate. This toxin acts on sphingomyelin (SM). It may also act on ceramide phosphoethanolamine (CPE), lysophosphatidylcholine (LPC) and lysophosphatidylethanolamine (LPE), but not on lysophosphatidylserine (LPS), and lysophosphatidylglycerol (LPG). It acts by transphosphatidylation, releasing exclusively cyclic phosphate products as second products. Induces dermonecrosis, hemolysis, increased vascular permeability, edema, inflammatory response, and platelet aggregation. In Loxosceles apachea (Apache recluse spider), this protein is Dermonecrotic toxin LapSicTox-alphaIB2.